The sequence spans 87 residues: Small ribosomal subunit protein uS15c (87 aa).

Positions 1-20 are disordered; that stretch reads MNQNLSIRKRNKLKQDSGSP.

The protein belongs to the universal ribosomal protein uS15 family. Part of the 30S ribosomal subunit.

The protein localises to the plastid. It localises to the chloroplast. This Zygnema circumcarinatum (Green alga) protein is Small ribosomal subunit protein uS15c (rps15).